The chain runs to 401 residues: Nicotinamide/nicotinic acid mononucleotide adenylyltransferase 1 (401 aa).

2 disordered regions span residues 1-30 and 48-123; these read MDPTRAPDFKPPSADEELIPPPDPESKIPK and APFN…RGVQ. Positions 52 to 69 are enriched in basic residues; the sequence is IKRKKKHPKHHHHHHHSR. Residues Ser91, Ser95, Ser96, and Ser111 each carry the phosphoserine modification. Residues Ser173 and Phe174 each coordinate NAD(+). His181 is a binding site for ATP. NAD(+) contacts are provided by Thr253, Gly288, Asp290, Trp301, Arg320, and Asn351. An ATP-binding site is contributed by 356–359; the sequence is TKVR.

This sequence belongs to the eukaryotic NMN adenylyltransferase family. In terms of assembly, homotetramer. Requires Ni(2+) as cofactor.

Its subcellular location is the cytoplasm. It localises to the nucleus. The catalysed reaction is beta-nicotinamide D-ribonucleotide + ATP + H(+) = diphosphate + NAD(+). It carries out the reaction nicotinate beta-D-ribonucleotide + ATP + H(+) = deamido-NAD(+) + diphosphate. Its pathway is cofactor biosynthesis; NAD(+) biosynthesis; deamido-NAD(+) from nicotinate D-ribonucleotide: step 1/1. The protein operates within cofactor biosynthesis; NAD(+) biosynthesis; NAD(+) from nicotinamide D-ribonucleotide: step 1/1. Its function is as follows. Catalyzes the formation of NAD(+) from nicotinamide mononucleotide (NMN) and ATP. Can also use the deamidated form; nicotinic acid mononucleotide (NaMN) as substrate to form deamido-NAD(+) (NaAD). Key enzyme in both de novo and salvage pathways for NAD(+) biosynthesis. Predominantly acts in the salvage pathways via NMN. The protein is Nicotinamide/nicotinic acid mononucleotide adenylyltransferase 1 of Saccharomyces cerevisiae (strain ATCC 204508 / S288c) (Baker's yeast).